We begin with the raw amino-acid sequence, 270 residues long: Elongation factor Ts (270 aa).

An involved in Mg(2+) ion dislocation from EF-Tu region spans residues 76–79; that stretch reads TDFV.

This sequence belongs to the EF-Ts family.

It localises to the cytoplasm. Associates with the EF-Tu.GDP complex and induces the exchange of GDP to GTP. It remains bound to the aminoacyl-tRNA.EF-Tu.GTP complex up to the GTP hydrolysis stage on the ribosome. The polypeptide is Elongation factor Ts (Corynebacterium aurimucosum (strain ATCC 700975 / DSM 44827 / CIP 107346 / CN-1) (Corynebacterium nigricans)).